Reading from the N-terminus, the 297-residue chain is Thiosulfate sulfurtransferase (297 aa).

At Lys14 the chain carries N6-acetyllysine; alternate. An N6-succinyllysine; alternate modification is found at Lys14. The Rhodanese 1 domain occupies 25 to 143 (VGPGLRVLDA…WLKEGHPVTS (119 aa)). Residue Ser35 is glycosylated (O-linked (GlcNAc) serine). Ser38 carries the post-translational modification Phosphoserine. Lys136 bears the N6-acetyllysine; alternate mark. The residue at position 136 (Lys136) is an N6-succinyllysine; alternate. The segment at 144–159 (EPSRPEPAIFKATLNR) is hinge. Lys163 carries the post-translational modification N6-acetyllysine. Residues 173–288 (ESKRFQLVDS…WFHRAPPETW (116 aa)) form the Rhodanese 2 domain. Lys175 is modified (N6-acetyllysine; alternate). Residue Lys175 is modified to N6-succinyllysine; alternate. Position 187 (Arg187) interacts with substrate. An N6-acetyllysine; alternate modification is found at Lys224. Position 224 is an N6-succinyllysine; alternate (Lys224). Lys236 carries the post-translational modification N6-acetyllysine. N6-acetyllysine; alternate is present on Lys237. N6-succinyllysine; alternate is present on Lys237. The Cysteine persulfide intermediate role is filled by Cys248. A substrate-binding site is contributed by Lys250.

As to quaternary structure, monomer. In terms of tissue distribution, expressed in numerous tissues.

It is found in the mitochondrion matrix. It carries out the reaction thiosulfate + hydrogen cyanide = thiocyanate + sulfite + 2 H(+). Functionally, together with MRPL18, acts as a mitochondrial import factor for the cytosolic 5S rRNA. Only the nascent unfolded cytoplasmic form is able to bind to the 5S rRNA. Formation of iron-sulfur complexes and cyanide detoxification. Binds molecular oxygen and sulfur. This chain is Thiosulfate sulfurtransferase (TST), found in Bos taurus (Bovine).